Consider the following 60-residue polypeptide: Mastoparan-VT4 (60 aa).

Positions 1-27 (MKNPILILFTAFIALLGFFGMSAEALA) are cleaved as a signal peptide. AXPX repeat units follow at residues 27–30 (ADPK), 31–34 (ADPL), 35–38 (AGPN), and 41–44 (ADPE). The propeptide occupies 28–45 (DPKADPLAGPNPDADPEA). Residue Leu-59 is modified to Leucine amide.

This sequence belongs to the MCD family. Mastoparan subfamily. As to expression, expressed by the venom gland.

The protein localises to the secreted. Its function is as follows. The synthetic peptide shows antimicrobial activities against Gram-negative bacteria (but not against all strains tested), Gram-positive bacteria (not all strains tested) and the fungi C.albicans and C.parapsilosis. Exhibits little hemolytic activity against washed human erythrocytes. The sequence is that of Mastoparan-VT4 from Vespa tropica (Greater banded hornet).